The primary structure comprises 300 residues: Transcription factor E2F5 (300 aa).

The DNA-binding element occupies 2 to 73 (GSSRHEKSLG…KNSIQWKGVG (72 aa)). Positions 31–53 (LKAAADTLAVRQKRRIYDITNVL) are leucine-zipper. A DEF box motif is present at residues 36-73 (DTLAVRQKRRIYDITNVLEGIDLIEKKSKNSIQWKGVG). The interval 74–170 (AGCNTKEVID…GQNGQKKYQI (97 aa)) is dimerization. A disordered region spans residues 191-250 (SKPVVFPVPPPDDLTQPSSQSSTSVTPPKSTMAAQNLPEQHVSERSQNFQQTPATEISSG). Residues 203–221 (DLTQPSSQSSTSVTPPKST) are compositionally biased toward low complexity. The segment covering 235 to 246 (RSQNFQQTPATE) has biased composition (polar residues). The segment at 242–300 (TPATEISSGSISGDIIDELMSSDVFPLLRLSPTPADDYNFNLDDNEGVCDLFDVQILNY) is transactivation. Residues 277-294 (DDYNFNLDDNEGVCDLFD) form an RBL2 association region.

The protein belongs to the E2F/DP family. Component of the DRTF1/E2F transcription factor complex. Binds cooperatively with DP-1 to E2F sites. Interaction with retinoblastoma protein RB1 or proteins RBL1 and RBL2 inhibits the E2F transactivation domain. Component of the DREAM complex (also named LINC complex) at least composed of E2F4, E2F5, LIN9, LIN37, LIN52, LIN54, MYBL1, MYBL2, RBL1, RBL2, RBBP4, TFDP1 and TFDP2. The complex exists in quiescent cells where it represses cell cycle-dependent genes. It dissociates in S phase when LIN9, LIN37, LIN52 and LIN54 form a subcomplex that binds to MYBL2. In terms of tissue distribution, found in placenta followed by kidney, lung and brain.

The protein resides in the nucleus. Functionally, transcriptional activator that binds to E2F sites, these sites are present in the promoter of many genes whose products are involved in cell proliferation. May mediate growth factor-initiated signal transduction. It is likely involved in the early responses of resting cells to growth factor stimulation. Specifically required for multiciliate cell differentiation: together with MCIDAS and E2F5, binds and activate genes required for centriole biogenesis. The protein is Transcription factor E2F5 (E2f5) of Rattus norvegicus (Rat).